The following is a 505-amino-acid chain: AMP phosphorylase (505 aa).

Residues G170, 196 to 201 (SRAITS), and T205 contribute to the AMP site. The Proton donor role is filled by D258. AMP contacts are provided by S266 and K290.

It belongs to the thymidine/pyrimidine-nucleoside phosphorylase family. Type 2 subfamily.

It carries out the reaction AMP + phosphate = alpha-D-ribose 1,5-bisphosphate + adenine. The enzyme catalyses CMP + phosphate = cytosine + alpha-D-ribose 1,5-bisphosphate. The catalysed reaction is UMP + phosphate = alpha-D-ribose 1,5-bisphosphate + uracil. Catalyzes the conversion of AMP and phosphate to adenine and ribose 1,5-bisphosphate (R15P). Exhibits phosphorylase activity toward CMP and UMP in addition to AMP. Functions in an archaeal AMP degradation pathway, together with R15P isomerase and RubisCO. The protein is AMP phosphorylase of Methanococcus maripaludis (strain C7 / ATCC BAA-1331).